The following is a 219-amino-acid chain: Protein-L-isoaspartate O-methyltransferase 2 (219 aa).

The active site involves S66.

The protein belongs to the methyltransferase superfamily. L-isoaspartyl/D-aspartyl protein methyltransferase family.

It localises to the cytoplasm. It carries out the reaction [protein]-L-isoaspartate + S-adenosyl-L-methionine = [protein]-L-isoaspartate alpha-methyl ester + S-adenosyl-L-homocysteine. In terms of biological role, catalyzes the methyl esterification of L-isoaspartyl residues in peptides and proteins that result from spontaneous decomposition of normal L-aspartyl and L-asparaginyl residues. It plays a role in the repair and/or degradation of damaged proteins. The sequence is that of Protein-L-isoaspartate O-methyltransferase 2 from Marinobacter nauticus (strain ATCC 700491 / DSM 11845 / VT8) (Marinobacter aquaeolei).